The sequence spans 690 residues: Ras guanyl-releasing protein 3 (690 aa).

Residues serine 3 to serine 125 form the N-terminal Ras-GEF domain. Positions glutamate 152–arginine 383 constitute a Ras-GEF domain. EF-hand domains lie at histidine 420–leucine 455 and phenylalanine 458–glutamine 484. Positions 433, 435, 437, 439, 444, 462, 464, 466, and 473 each coordinate Ca(2+). The Phorbol-ester/DAG-type zinc finger occupies isoleucine 494–cysteine 544. The segment at valine 667–glycine 690 is disordered.

This sequence belongs to the RASGRP family.

Its function is as follows. Guanine nucleotide exchange factor (GEF) for Ras and Rap1. The protein is Ras guanyl-releasing protein 3 (RASGRP3) of Homo sapiens (Human).